Consider the following 149-residue polypeptide: Transcriptional repressor NrdR (149 aa).

Residues 3–34 (CPFCSIQETKVIDSRLVADGHQVRRRRECTMC) fold into a zinc finger. Residues 49–139 (PRVVKRDGSR…VYRSFEDIRE (91 aa)) enclose the ATP-cone domain.

The protein belongs to the NrdR family. It depends on Zn(2+) as a cofactor.

Its function is as follows. Negatively regulates transcription of bacterial ribonucleotide reductase nrd genes and operons by binding to NrdR-boxes. In Pseudoalteromonas atlantica (strain T6c / ATCC BAA-1087), this protein is Transcriptional repressor NrdR.